The sequence spans 463 residues: Cysteine--tRNA ligase (463 aa).

Position 27 (C27) interacts with Zn(2+). The 'HIGH' region motif lies at 29-39 (PTVYGLIHIGN). C207, H232, and E236 together coordinate Zn(2+). The 'KMSKS' region motif lies at 264 to 268 (KMSKS). Residue K267 participates in ATP binding.

This sequence belongs to the class-I aminoacyl-tRNA synthetase family. As to quaternary structure, monomer. Requires Zn(2+) as cofactor.

Its subcellular location is the cytoplasm. It catalyses the reaction tRNA(Cys) + L-cysteine + ATP = L-cysteinyl-tRNA(Cys) + AMP + diphosphate. This Pseudothermotoga lettingae (strain ATCC BAA-301 / DSM 14385 / NBRC 107922 / TMO) (Thermotoga lettingae) protein is Cysteine--tRNA ligase.